The sequence spans 382 residues: Glutamate 5-kinase (382 aa).

Lysine 15 contacts ATP. 3 residues coordinate substrate: serine 62, aspartate 149, and asparagine 161. ATP is bound at residue 181-182; sequence TD. The PUA domain occupies 288–366; sequence RGSVSVDAGA…VEIERLLGYS (79 aa).

It belongs to the glutamate 5-kinase family.

The protein localises to the cytoplasm. The enzyme catalyses L-glutamate + ATP = L-glutamyl 5-phosphate + ADP. It functions in the pathway amino-acid biosynthesis; L-proline biosynthesis; L-glutamate 5-semialdehyde from L-glutamate: step 1/2. Its function is as follows. Catalyzes the transfer of a phosphate group to glutamate to form L-glutamate 5-phosphate. This chain is Glutamate 5-kinase, found in Delftia acidovorans (strain DSM 14801 / SPH-1).